The primary structure comprises 129 residues: Tumor necrosis factor receptor superfamily member 12A (129 aa).

The signal sequence occupies residues 1–27 (MASAWPRSLPQILVLGFGLVLMRAAAG). At 28 to 80 (EQAPGTSPCSSGSSWSADLDKCMDCASCPARPHSDFCLGCAAAPPAHFRLLWP) the chain is on the extracellular side. Disulfide bonds link Cys36/Cys49, Cys52/Cys67, and Cys55/Cys64. Residues 36-67 (CSSGSSWSADLDKCMDCASCPARPHSDFCLGC) form a TNFR-Cys; atypical repeat. The chain crosses the membrane as a helical span at residues 81–101 (ILGGALSLVLVLALVSSFLVW). Residues 102–129 (RRCRRREKFTTPIEETGGEGCPGVALIQ) lie on the Cytoplasmic side of the membrane.

Associates with TRAF1 and TRAF2, and probably also with TRAF3. Highly expressed in fetal heart, intestine, kidney, liver, lung and skin, and in adult heart and ovary. Intermediate expression in adult kidney, lung and skin.

The protein resides in the membrane. Its function is as follows. Receptor for TNFSF12/TWEAK. Weak inducer of apoptosis in some cell types. Promotes angiogenesis and the proliferation of endothelial cells. May modulate cellular adhesion to matrix proteins. This Mus musculus (Mouse) protein is Tumor necrosis factor receptor superfamily member 12A (Tnfrsf12a).